Reading from the N-terminus, the 113-residue chain is Large ribosomal subunit protein uL22 (113 aa).

The protein belongs to the universal ribosomal protein uL22 family. Part of the 50S ribosomal subunit.

Functionally, this protein binds specifically to 23S rRNA; its binding is stimulated by other ribosomal proteins, e.g. L4, L17, and L20. It is important during the early stages of 50S assembly. It makes multiple contacts with different domains of the 23S rRNA in the assembled 50S subunit and ribosome. Its function is as follows. The globular domain of the protein is located near the polypeptide exit tunnel on the outside of the subunit, while an extended beta-hairpin is found that lines the wall of the exit tunnel in the center of the 70S ribosome. This is Large ribosomal subunit protein uL22 from Xanthomonas axonopodis pv. citri (strain 306).